A 427-amino-acid chain; its full sequence is 3-phosphoshikimate 1-carboxyvinyltransferase (427 aa).

3-phosphoshikimate is bound by residues K20, S21, and R25. Position 20 (K20) interacts with phosphoenolpyruvate. Residues G92 and R120 each contribute to the phosphoenolpyruvate site. 3-phosphoshikimate is bound by residues S166, Q168, D312, and K339. Phosphoenolpyruvate is bound at residue Q168. The active-site Proton acceptor is the D312. Residues R343 and R385 each coordinate phosphoenolpyruvate.

Belongs to the EPSP synthase family. Monomer.

It is found in the cytoplasm. The enzyme catalyses 3-phosphoshikimate + phosphoenolpyruvate = 5-O-(1-carboxyvinyl)-3-phosphoshikimate + phosphate. It participates in metabolic intermediate biosynthesis; chorismate biosynthesis; chorismate from D-erythrose 4-phosphate and phosphoenolpyruvate: step 6/7. Functionally, catalyzes the transfer of the enolpyruvyl moiety of phosphoenolpyruvate (PEP) to the 5-hydroxyl of shikimate-3-phosphate (S3P) to produce enolpyruvyl shikimate-3-phosphate and inorganic phosphate. The protein is 3-phosphoshikimate 1-carboxyvinyltransferase of Streptococcus pneumoniae serotype 19F (strain G54).